A 149-amino-acid polypeptide reads, in one-letter code: Large ribosomal subunit protein bL9 (149 aa).

This sequence belongs to the bacterial ribosomal protein bL9 family.

Functionally, binds to the 23S rRNA. In Christiangramia forsetii (strain DSM 17595 / CGMCC 1.15422 / KT0803) (Gramella forsetii), this protein is Large ribosomal subunit protein bL9.